Consider the following 517-residue polypeptide: Ammonium transporter 3 (517 aa).

Topologically, residues 1 to 32 (MLNEPNALLRRDANSTIATVTELFPNEYSNAD) are extracellular. A helical transmembrane segment spans residues 33–53 (IAYVLLSTVVVFTVTPGIALY). Residues 54 to 69 (YAGMVRKNSALSILTQ) are Cytoplasmic-facing. The helical transmembrane segment at 70–90 (SFLVTAVVFIQWYLFGYSLAC) threads the bilayer. Residues 91–118 (SSGSSFYGTLWQGGMNHLWLEPYIPGST) lie on the Extracellular side of the membrane. The helical transmembrane segment at 119–139 (IPAIVYFPFGGLFAVATAQLF) threads the bilayer. Residues 140 to 148 (AGAMAERGR) lie on the Cytoplasmic side of the membrane. A helical transmembrane segment spans residues 149–169 (LIPSLVISFLYITLVYCPQAY). Over 170-180 (WTWAPNGWLYT) the chain is Extracellular. A helical transmembrane segment spans residues 181–201 (LGALDFAGGGPVHISSGFAAL). Over 202 to 272 (AYSLCLGRRI…AHNPPHDAGM (71 aa)) the chain is Cytoplasmic. The helical transmembrane segment at 273-293 (VYIGVVLIWFAWLCFNSGTLL) threads the bilayer. Over 294–299 (TVNIRT) the chain is Extracellular. A helical membrane pass occupies residues 300–320 (AYIMTNTLISSSFGALTWAII). Over 321–327 (DYIRYRK) the chain is Cytoplasmic. Residues 328–348 (FSTIGICEGAIAGLVGITPAC) form a helical membrane-spanning segment. Position 349 (glycine 349) is a topological domain, extracellular. The helical transmembrane segment at 350–370 (FVFPWGAAAGGIVPALVCNFL) threads the bilayer. The Cytoplasmic portion of the chain corresponds to 371 to 384 (HDLNEWIGVDETLR). A helical membrane pass occupies residues 385 to 405 (VFNLHGIGGIVGSIVLGVVAH). Over 406–432 (PDVAASDGATVIDGGWAVHHWKQMGYQ) the chain is Extracellular. A helical transmembrane segment spans residues 433–453 (FAGFTSVAAWSFVITAIICLL). The Cytoplasmic portion of the chain corresponds to 454 to 517 (VDLVPGLHIR…NIKQEKQDEF (64 aa)).

The protein belongs to the ammonia transporter channel (TC 1.A.11.2) family.

Its subcellular location is the membrane. Its function is as follows. Transporter for ammonium to use as a nitrogen source. The polypeptide is Ammonium transporter 3 (amt3) (Schizosaccharomyces pombe (strain 972 / ATCC 24843) (Fission yeast)).